The primary structure comprises 283 residues: Bifunctional protein FolD (283 aa).

NADP(+) is bound by residues 166–168 (GAS) and I232.

The protein belongs to the tetrahydrofolate dehydrogenase/cyclohydrolase family. In terms of assembly, homodimer.

The enzyme catalyses (6R)-5,10-methylene-5,6,7,8-tetrahydrofolate + NADP(+) = (6R)-5,10-methenyltetrahydrofolate + NADPH. The catalysed reaction is (6R)-5,10-methenyltetrahydrofolate + H2O = (6R)-10-formyltetrahydrofolate + H(+). It functions in the pathway one-carbon metabolism; tetrahydrofolate interconversion. Catalyzes the oxidation of 5,10-methylenetetrahydrofolate to 5,10-methenyltetrahydrofolate and then the hydrolysis of 5,10-methenyltetrahydrofolate to 10-formyltetrahydrofolate. This Hamiltonella defensa subsp. Acyrthosiphon pisum (strain 5AT) protein is Bifunctional protein FolD.